The primary structure comprises 446 residues: Signal recognition particle 54 kDa protein (446 aa).

Residues 104–111 (GLQGSGKT), 184–188 (DTAGR), and 242–245 (TKMD) each bind GTP.

The protein belongs to the GTP-binding SRP family. SRP54 subfamily. As to quaternary structure, part of the signal recognition particle protein translocation system, which is composed of SRP and FtsY. Archaeal SRP consists of a 7S RNA molecule of 300 nucleotides and two protein subunits: SRP54 and SRP19.

The protein localises to the cytoplasm. The catalysed reaction is GTP + H2O = GDP + phosphate + H(+). In terms of biological role, involved in targeting and insertion of nascent membrane proteins into the cytoplasmic membrane. Binds to the hydrophobic signal sequence of the ribosome-nascent chain (RNC) as it emerges from the ribosomes. The SRP-RNC complex is then targeted to the cytoplasmic membrane where it interacts with the SRP receptor FtsY. The chain is Signal recognition particle 54 kDa protein from Methanocorpusculum labreanum (strain ATCC 43576 / DSM 4855 / Z).